A 293-amino-acid chain; its full sequence is Formamidopyrimidine-DNA glycosylase (293 aa).

The Schiff-base intermediate with DNA role is filled by Pro2. The active-site Proton donor is the Glu3. Lys58 (proton donor; for beta-elimination activity) is an active-site residue. Residues His104, Arg127, and Arg170 each coordinate DNA. An FPG-type zinc finger spans residues Ser257–Thr293. Arg283 serves as the catalytic Proton donor; for delta-elimination activity.

It belongs to the FPG family. Monomer. Zn(2+) serves as cofactor.

It carries out the reaction Hydrolysis of DNA containing ring-opened 7-methylguanine residues, releasing 2,6-diamino-4-hydroxy-5-(N-methyl)formamidopyrimidine.. The catalysed reaction is 2'-deoxyribonucleotide-(2'-deoxyribose 5'-phosphate)-2'-deoxyribonucleotide-DNA = a 3'-end 2'-deoxyribonucleotide-(2,3-dehydro-2,3-deoxyribose 5'-phosphate)-DNA + a 5'-end 5'-phospho-2'-deoxyribonucleoside-DNA + H(+). In terms of biological role, involved in base excision repair of DNA damaged by oxidation or by mutagenic agents. Acts as a DNA glycosylase that recognizes and removes damaged bases. Has a preference for oxidized purines, such as 7,8-dihydro-8-oxoguanine (8-oxoG). Has AP (apurinic/apyrimidinic) lyase activity and introduces nicks in the DNA strand. Cleaves the DNA backbone by beta-delta elimination to generate a single-strand break at the site of the removed base with both 3'- and 5'-phosphates. This Brucella ovis (strain ATCC 25840 / 63/290 / NCTC 10512) protein is Formamidopyrimidine-DNA glycosylase.